A 750-amino-acid chain; its full sequence is MIIRSPEPEVKILVDRDPIKTSFEEWARPGHFSRTIAKGPDTTTWIWNLHADAHDFDSHTSDLEEISRKVFSAHFGQLSIIFLWLSGMYFHGARFSNYEAWLSDPTHIGPSAQVVWPIVGQEILNGDVGGGFRGIQITSGFFQMWRASGITNELQLYCTAIGALVFAALMLFAGWFHYHKAAPKLAWFQDVESMLNHHLAGLLGLGSLSWAGHQVHVSLPINQFLNAGVDPKEIPLPHEFILNRDLLAQLYPSFAEGATPFFTLNWSKYAEFLTFRGGLDPVTGGLWLTDIAHHHLAIAILFLIAGHMYRTNWGIGHGLKDILEAHKGPFTGQGHKGLYEILTTSWHAQLSLNLAMLGSLTIVVAHHMYSMPPYPYLATDYGTQLSLFTHHMWIGGFLIVGAAAHAAIFMVRDYDPTTRYNDLLDRVLRHRDAIISHLNWACIFLGFHSFGLYIHNDTMSALGRPQDMFSDTAIQLQPVFAQWIQNTHALAPSATAPGATTSTSLTWGGGDLVAVGGKVALLPIPLGTADFLVHHIHAFTIHVTVLILLKGVLFARSSRLIPDKANLGFRFPCDGPGRGGTCQVSAWDHVFLGLFWMYNSISVVIFHFSWKMQSDVWGSISDQGVLTHITGGNFAQSSITINGWLRDFLWAQASQVIQSYGSSLSAYGLFFLGAHFVWAFSLMFLFSGRGYWQELIESIVWAHNKLKVAPATQPRALSIVQGRAVGVTHYLLGGIATTWAFFLARIIAVG.

The next 8 helical transmembrane spans lie at 70–93 (VFSAHFGQLSIIFLWLSGMYFHGA), 156–179 (LYCTAIGALVFAALMLFAGWFHYH), 195–219 (LNHHLAGLLGLGSLSWAGHQVHVSL), 291–309 (IAHHHLAIAILFLIAGHMY), 346–369 (WHAQLSLNLAMLGSLTIVVAHHMY), 385–411 (LSLFTHHMWIGGFLIVGAAAHAAIFMV), 433–455 (AIISHLNWACIFLGFHSFGLYIH), and 531–549 (FLVHHIHAFTIHVTVLILL). [4Fe-4S] cluster is bound by residues Cys-573 and Cys-582. The next 2 membrane-spanning stretches (helical) occupy residues 589-610 (HVFLGLFWMYNSISVVIFHFSW) and 664-686 (LSAYGLFFLGAHFVWAFSLMFLF). His-675 serves as a coordination point for chlorophyll a'. Residues Met-683 and Tyr-691 each coordinate chlorophyll a. Trp-692 serves as a coordination point for phylloquinone. A helical transmembrane segment spans residues 724-744 (AVGVTHYLLGGIATTWAFFLA).

The protein belongs to the PsaA/PsaB family. The PsaA/B heterodimer binds the P700 chlorophyll special pair and subsequent electron acceptors. PSI consists of a core antenna complex that captures photons, and an electron transfer chain that converts photonic excitation into a charge separation. The eukaryotic PSI reaction center is composed of at least 11 subunits. P700 is a chlorophyll a/chlorophyll a' dimer, A0 is one or more chlorophyll a, A1 is one or both phylloquinones and FX is a shared 4Fe-4S iron-sulfur center. serves as cofactor.

Its subcellular location is the plastid. The protein localises to the chloroplast thylakoid membrane. It catalyses the reaction reduced [plastocyanin] + hnu + oxidized [2Fe-2S]-[ferredoxin] = oxidized [plastocyanin] + reduced [2Fe-2S]-[ferredoxin]. PsaA and PsaB bind P700, the primary electron donor of photosystem I (PSI), as well as the electron acceptors A0, A1 and FX. PSI is a plastocyanin-ferredoxin oxidoreductase, converting photonic excitation into a charge separation, which transfers an electron from the donor P700 chlorophyll pair to the spectroscopically characterized acceptors A0, A1, FX, FA and FB in turn. Oxidized P700 is reduced on the lumenal side of the thylakoid membrane by plastocyanin. This is Photosystem I P700 chlorophyll a apoprotein A1 from Vitis vinifera (Grape).